The sequence spans 262 residues: Polyamine aminopropyltransferase (262 aa).

Positions 1–249 constitute a PABS domain; that stretch reads MWITQEITPY…DIHRAAFALP (249 aa). Asparagine 29 is an S-methyl-5'-thioadenosine binding site. Aspartate 83 provides a ligand contact to spermidine. The active-site Proton acceptor is aspartate 155.

The protein belongs to the spermidine/spermine synthase family. As to quaternary structure, homodimer or homotetramer.

It is found in the cytoplasm. The catalysed reaction is S-adenosyl 3-(methylsulfanyl)propylamine + putrescine = S-methyl-5'-thioadenosine + spermidine + H(+). It participates in amine and polyamine biosynthesis; spermidine biosynthesis; spermidine from putrescine: step 1/1. Its function is as follows. Catalyzes the irreversible transfer of a propylamine group from the amino donor S-adenosylmethioninamine (decarboxy-AdoMet) to putrescine (1,4-diaminobutane) to yield spermidine. This chain is Polyamine aminopropyltransferase, found in Helicobacter pylori (strain G27).